Reading from the N-terminus, the 372-residue chain is Glutamate 5-kinase (372 aa).

An ATP-binding site is contributed by Lys-14. 3 residues coordinate substrate: Ser-54, Asp-141, and Asn-153. An ATP-binding site is contributed by Thr-173–Asp-174. One can recognise a PUA domain in the interval Arg-280–Met-358.

It belongs to the glutamate 5-kinase family.

The protein resides in the cytoplasm. The catalysed reaction is L-glutamate + ATP = L-glutamyl 5-phosphate + ADP. It functions in the pathway amino-acid biosynthesis; L-proline biosynthesis; L-glutamate 5-semialdehyde from L-glutamate: step 1/2. Its function is as follows. Catalyzes the transfer of a phosphate group to glutamate to form L-glutamate 5-phosphate. The chain is Glutamate 5-kinase from Burkholderia ambifaria (strain ATCC BAA-244 / DSM 16087 / CCUG 44356 / LMG 19182 / AMMD) (Burkholderia cepacia (strain AMMD)).